Reading from the N-terminus, the 70-residue chain is Small ribosomal subunit protein bS21 (70 aa).

The protein belongs to the bacterial ribosomal protein bS21 family.

The chain is Small ribosomal subunit protein bS21 from Nitratidesulfovibrio vulgaris (strain ATCC 29579 / DSM 644 / CCUG 34227 / NCIMB 8303 / VKM B-1760 / Hildenborough) (Desulfovibrio vulgaris).